The chain runs to 402 residues: DNA polymerase IV (402 aa).

The UmuC domain occupies 5-187; sequence ILLADMNSFY…LPVRELFGVG (183 aa). Mg(2+)-binding residues include Asp-9 and Asp-105. Glu-106 is a catalytic residue.

It belongs to the DNA polymerase type-Y family. In terms of assembly, monomer. Mg(2+) is required as a cofactor.

It localises to the cytoplasm. The enzyme catalyses DNA(n) + a 2'-deoxyribonucleoside 5'-triphosphate = DNA(n+1) + diphosphate. In terms of biological role, poorly processive, error-prone DNA polymerase involved in untargeted mutagenesis. Copies undamaged DNA at stalled replication forks, which arise in vivo from mismatched or misaligned primer ends. These misaligned primers can be extended by PolIV. Exhibits no 3'-5' exonuclease (proofreading) activity. May be involved in translesional synthesis, in conjunction with the beta clamp from PolIII. This is DNA polymerase IV from Pelotomaculum thermopropionicum (strain DSM 13744 / JCM 10971 / SI).